A 103-amino-acid chain; its full sequence is RNA-binding protein YlxQ (103 aa).

It belongs to the eukaryotic ribosomal protein eL8 family.

Functionally, RNA-binding protein that recognizes the K-turn motif present in ribosomal RNA, but also in box C/D and box C'/D' sRNAs. This is RNA-binding protein YlxQ from Enterococcus faecium (Streptococcus faecium).